The following is a 199-amino-acid chain: TATA-box-binding protein (199 aa).

Tandem repeats lie at residues 23 to 99 and 114 to 190.

This sequence belongs to the TBP family.

General factor that plays a role in the activation of archaeal genes transcribed by RNA polymerase. Binds specifically to the TATA box promoter element which lies close to the position of transcription initiation. This is TATA-box-binding protein (tbp) from Pyrodictium occultum.